A 345-amino-acid polypeptide reads, in one-letter code: S-adenosylmethionine:tRNA ribosyltransferase-isomerase (345 aa).

It belongs to the QueA family. In terms of assembly, monomer.

The protein resides in the cytoplasm. The enzyme catalyses 7-aminomethyl-7-carbaguanosine(34) in tRNA + S-adenosyl-L-methionine = epoxyqueuosine(34) in tRNA + adenine + L-methionine + 2 H(+). It functions in the pathway tRNA modification; tRNA-queuosine biosynthesis. Functionally, transfers and isomerizes the ribose moiety from AdoMet to the 7-aminomethyl group of 7-deazaguanine (preQ1-tRNA) to give epoxyqueuosine (oQ-tRNA). The sequence is that of S-adenosylmethionine:tRNA ribosyltransferase-isomerase from Shewanella putrefaciens (strain CN-32 / ATCC BAA-453).